Reading from the N-terminus, the 123-residue chain is UPF0102 protein Pput_4400 (123 aa).

It belongs to the UPF0102 family.

This Pseudomonas putida (strain ATCC 700007 / DSM 6899 / JCM 31910 / BCRC 17059 / LMG 24140 / F1) protein is UPF0102 protein Pput_4400.